A 141-amino-acid polypeptide reads, in one-letter code: Small ribosomal subunit protein uS12 (141 aa).

Polar residues predominate over residues 1–11 (MPTISQLVTTS). The segment at 1-22 (MPTISQLVTTSRQDKNYKSKSP) is disordered. At aspartate 102 the chain carries 3-methylthioaspartic acid.

The protein belongs to the universal ribosomal protein uS12 family. In terms of assembly, part of the 30S ribosomal subunit. Contacts proteins S8 and S17. May interact with IF1 in the 30S initiation complex.

In terms of biological role, with S4 and S5 plays an important role in translational accuracy. Its function is as follows. Interacts with and stabilizes bases of the 16S rRNA that are involved in tRNA selection in the A site and with the mRNA backbone. Located at the interface of the 30S and 50S subunits, it traverses the body of the 30S subunit contacting proteins on the other side and probably holding the rRNA structure together. The combined cluster of proteins S8, S12 and S17 appears to hold together the shoulder and platform of the 30S subunit. In Acholeplasma laidlawii (strain PG-8A), this protein is Small ribosomal subunit protein uS12.